Reading from the N-terminus, the 555-residue chain is Putative ankyrin repeat protein L283 (555 aa).

ANK repeat units follow at residues 364 to 389, 390 to 420, 422 to 447, and 455 to 488; these read TKVN…EDDI, VFKK…DINE, IKLA…KVRC, and GYLE…EGGK.

The sequence is that of Putative ankyrin repeat protein L283 from Acanthamoeba polyphaga mimivirus (APMV).